The primary structure comprises 97 residues: Small integral membrane protein 8 (97 aa).

Residues 1-22 (MSSAPEPPAFKKEPPKEKDLGN) form a disordered region. The span at 9-20 (AFKKEPPKEKDL) shows a compositional bias: basic and acidic residues. The chain crosses the membrane as a helical span at residues 48 to 70 (PVMAFGLITISLCVAYIGYLHAT).

The protein belongs to the SMIM8 family.

It localises to the membrane. This Bos taurus (Bovine) protein is Small integral membrane protein 8 (SMIM8).